Here is an 867-residue protein sequence, read N- to C-terminus: G-protein coupled receptor family C group 6 member A (867 aa).

An N-terminal signal peptide occupies residues 1–19; the sequence is MDLMSFILLWAGLMKVAEA. Residues 20–566 are Extracellular-facing; sequence SIAQFSQLGA…EYFDWNSGFA (547 aa). 10 N-linked (GlcNAc...) asparagine glycosylation sites follow: Asn-51, Asn-55, Asn-97, Asn-296, Asn-308, Asn-336, Asn-356, Asn-370, Asn-527, and Asn-547. Residues 567-587 form a helical membrane-spanning segment; the sequence is IVLLILAALGVLLLFFMSALF. Residues 588–602 are Cytoplasmic-facing; that stretch reads FWQRHSPVVKAAGGP. Residues 603–623 form a helical membrane-spanning segment; sequence LCHLILVSLLGSFISVVFFVG. Over 624–634 the chain is Extracellular; the sequence is EPSDLTCRARQ. A helical transmembrane segment spans residues 635-655; it reads VIFGFSFTLCVSCILVKSLKI. Residues 656-675 lie on the Cytoplasmic side of the membrane; that stretch reads LLAFEMNFELKELLCMLYKP. Residues 676 to 696 form a helical membrane-spanning segment; that stretch reads YMIVSVGMGVQIIICTVWLTL. Residues 697 to 716 are Extracellular-facing; sequence YKPFKDKEVQTESILLECNE. Residues 717-737 traverse the membrane as a helical segment; it reads GFYVMFWLMLGYIALLALFCF. Over 738-754 the chain is Cytoplasmic; sequence TFAYIGRKLPQKYNEAK. Residues 755–775 traverse the membrane as a helical segment; the sequence is FITFSMVICLMAWIIFIPIHV. Residues 776 to 781 are Extracellular-facing; it reads TTSGKY. The helical transmembrane segment at 782 to 802 threads the bilayer; the sequence is VPAVEMVVILISNYGILSCHF. At 803-867 the chain is on the cytoplasmic side; that stretch reads LPKSYIILFK…LSFVPEEKHE (65 aa).

It belongs to the G-protein coupled receptor 3 family. As to quaternary structure, homodimer; disulfide-linked.

The protein resides in the cell membrane. Functionally, olfactory receptor that is activated by amino acids that act as potent odorants in fish. Displays preference for acidic amino acids such as Glu over basic amino acids. The polypeptide is G-protein coupled receptor family C group 6 member A (gprc6a) (Danio rerio (Zebrafish)).